The chain runs to 407 residues: Methylenetetrahydrofolate--tRNA-(uracil-5-)-methyltransferase TrmFO (407 aa).

9–14 (GAGLAG) provides a ligand contact to FAD.

The protein belongs to the MnmG family. TrmFO subfamily. The cofactor is FAD.

It localises to the cytoplasm. It carries out the reaction uridine(54) in tRNA + (6R)-5,10-methylene-5,6,7,8-tetrahydrofolate + NADH + H(+) = 5-methyluridine(54) in tRNA + (6S)-5,6,7,8-tetrahydrofolate + NAD(+). The enzyme catalyses uridine(54) in tRNA + (6R)-5,10-methylene-5,6,7,8-tetrahydrofolate + NADPH + H(+) = 5-methyluridine(54) in tRNA + (6S)-5,6,7,8-tetrahydrofolate + NADP(+). Its function is as follows. Catalyzes the folate-dependent formation of 5-methyl-uridine at position 54 (M-5-U54) in all tRNAs. In Lactobacillus helveticus (strain DPC 4571), this protein is Methylenetetrahydrofolate--tRNA-(uracil-5-)-methyltransferase TrmFO.